Reading from the N-terminus, the 522-residue chain is Sugar transport protein MST2 (522 aa).

At 1–24 (MAAATAADVAEDTASVYSGKLTLY) the chain is on the cytoplasmic side. A helical membrane pass occupies residues 25-45 (VFLTCGVAATGGLIIGYDIGI). The Extracellular segment spans residues 46-82 (SGGVTSMDTFLGKFFPSVLHQEQTAQGTSQYCKFNSQ). A helical transmembrane segment spans residues 83-103 (PLTAFTSSLYLAALVASFFVA). Residues 104–111 (SFTRALGR) are Cytoplasmic-facing. A helical transmembrane segment spans residues 112-132 (KWSMFGGGVSFLAGATLNGAA). Over 133–134 (RN) the chain is Extracellular. The chain crosses the membrane as a helical span at residues 135–155 (VAMLIVGRILLGIGVAFCGLS). Residues 156-169 (TPIYLSEMAPPRLR) are Cytoplasmic-facing. Residues 170-190 (GMLNIGLQLMITVGIFSANLV) traverse the membrane as a helical segment. Over 191-204 (NYGAAKIRGGWGWR) the chain is Extracellular. The helical transmembrane segment at 205 to 225 (VSLGLAAAPACVIAVGSLFLP) threads the bilayer. Residues 226–291 (DSPSSLINRG…DVLQRRYRPQ (66 aa)) lie on the Cytoplasmic side of the membrane. The chain crosses the membrane as a helical span at residues 292-312 (LAMAVLIPFFQQLTGINVIMF). Topologically, residues 313–329 (YAPVLFKTIGLGGDASL) are extracellular. The chain crosses the membrane as a helical span at residues 330-350 (MSAVITGLVNIVATFVSIATV). The Cytoplasmic segment spans residues 351–361 (DSLGRRKLLFQ). Residues 362–382 (GGCQMLVSQVIIGTLIGVVFG) form a helical membrane-spanning segment. The Extracellular portion of the chain corresponds to 383-391 (TSGDGNISR). Residues 392–412 (ALAVCIVVFICVYVAGFAWSW) form a helical membrane-spanning segment. The Cytoplasmic segment spans residues 413-434 (GPLGVLLPSEIFPLEVRPAGQS). The chain crosses the membrane as a helical span at residues 435-455 (ISVAVNMLCTFAVAEAFLPML). Residues 456–459 (CHMR) are Extracellular-facing. A helical membrane pass occupies residues 460–480 (FGLFYFFSGWVLVMTLFVSAF). Topologically, residues 481–522 (LPETKGVPIEKMTVVWRTHWFWGRFYCNQDADAHVQVANSKV) are cytoplasmic.

This sequence belongs to the major facilitator superfamily. Sugar transporter (TC 2.A.1.1) family.

It is found in the membrane. Functionally, mediates active uptake of hexoses by sugar:proton symport. Can transport glucose. This is Sugar transport protein MST2 from Oryza sativa subsp. japonica (Rice).